The primary structure comprises 204 residues: Leucyl/phenylalanyl-tRNA--protein transferase (204 aa).

It belongs to the L/F-transferase family.

It localises to the cytoplasm. It carries out the reaction N-terminal L-lysyl-[protein] + L-leucyl-tRNA(Leu) = N-terminal L-leucyl-L-lysyl-[protein] + tRNA(Leu) + H(+). It catalyses the reaction N-terminal L-arginyl-[protein] + L-leucyl-tRNA(Leu) = N-terminal L-leucyl-L-arginyl-[protein] + tRNA(Leu) + H(+). The catalysed reaction is L-phenylalanyl-tRNA(Phe) + an N-terminal L-alpha-aminoacyl-[protein] = an N-terminal L-phenylalanyl-L-alpha-aminoacyl-[protein] + tRNA(Phe). Functions in the N-end rule pathway of protein degradation where it conjugates Leu, Phe and, less efficiently, Met from aminoacyl-tRNAs to the N-termini of proteins containing an N-terminal arginine or lysine. The polypeptide is Leucyl/phenylalanyl-tRNA--protein transferase (Rhizobium etli (strain CIAT 652)).